A 189-amino-acid chain; its full sequence is Probable nicotinate-nucleotide adenylyltransferase (189 aa).

Belongs to the NadD family.

The catalysed reaction is nicotinate beta-D-ribonucleotide + ATP + H(+) = deamido-NAD(+) + diphosphate. It participates in cofactor biosynthesis; NAD(+) biosynthesis; deamido-NAD(+) from nicotinate D-ribonucleotide: step 1/1. Catalyzes the reversible adenylation of nicotinate mononucleotide (NaMN) to nicotinic acid adenine dinucleotide (NaAD). This is Probable nicotinate-nucleotide adenylyltransferase from Bacillus mycoides (strain KBAB4) (Bacillus weihenstephanensis).